A 620-amino-acid polypeptide reads, in one-letter code: 1-deoxy-D-xylulose-5-phosphate synthase (620 aa).

Thiamine diphosphate is bound by residues H80 and 121-123 (GHS). Position 152 (D152) interacts with Mg(2+). Thiamine diphosphate contacts are provided by residues 153-154 (GA), N181, Y288, and E370. Residue N181 coordinates Mg(2+).

This sequence belongs to the transketolase family. DXPS subfamily. In terms of assembly, homodimer. Mg(2+) is required as a cofactor. The cofactor is thiamine diphosphate.

It carries out the reaction D-glyceraldehyde 3-phosphate + pyruvate + H(+) = 1-deoxy-D-xylulose 5-phosphate + CO2. It functions in the pathway metabolic intermediate biosynthesis; 1-deoxy-D-xylulose 5-phosphate biosynthesis; 1-deoxy-D-xylulose 5-phosphate from D-glyceraldehyde 3-phosphate and pyruvate: step 1/1. Catalyzes the acyloin condensation reaction between C atoms 2 and 3 of pyruvate and glyceraldehyde 3-phosphate to yield 1-deoxy-D-xylulose-5-phosphate (DXP). The chain is 1-deoxy-D-xylulose-5-phosphate synthase from Shigella boydii serotype 18 (strain CDC 3083-94 / BS512).